Consider the following 122-residue polypeptide: Large ribosomal subunit protein uL14 (122 aa).

Belongs to the universal ribosomal protein uL14 family. As to quaternary structure, part of the 50S ribosomal subunit. Forms a cluster with proteins L3 and L19. In the 70S ribosome, L14 and L19 interact and together make contacts with the 16S rRNA in bridges B5 and B8.

In terms of biological role, binds to 23S rRNA. Forms part of two intersubunit bridges in the 70S ribosome. This is Large ribosomal subunit protein uL14 from Acinetobacter baylyi (strain ATCC 33305 / BD413 / ADP1).